We begin with the raw amino-acid sequence, 66 residues long: Surface composition regulator (66 aa).

Belongs to the GlgS family.

In terms of biological role, major determinant of cell surface composition. Negatively regulates motility, adhesion and synthesis of biofilm exopolysaccharides. The sequence is that of Surface composition regulator from Escherichia coli O127:H6 (strain E2348/69 / EPEC).